Here is a 450-residue protein sequence, read N- to C-terminus: Glutamyl-tRNA reductase (450 aa).

Substrate-binding positions include 50 to 53 (TCNR), S109, 114 to 116 (EPQ), and Q120. C51 (nucleophile) is an active-site residue. Residue 189 to 194 (GAGEMA) coordinates NADP(+). The disordered stretch occupies residues 422 to 450 (NEPEQPEAHKNRKRPQPDLPAGCPGKTIL).

The protein belongs to the glutamyl-tRNA reductase family. As to quaternary structure, homodimer.

The catalysed reaction is (S)-4-amino-5-oxopentanoate + tRNA(Glu) + NADP(+) = L-glutamyl-tRNA(Glu) + NADPH + H(+). The protein operates within porphyrin-containing compound metabolism; protoporphyrin-IX biosynthesis; 5-aminolevulinate from L-glutamyl-tRNA(Glu): step 1/2. Functionally, catalyzes the NADPH-dependent reduction of glutamyl-tRNA(Glu) to glutamate 1-semialdehyde (GSA). This Oleidesulfovibrio alaskensis (strain ATCC BAA-1058 / DSM 17464 / G20) (Desulfovibrio alaskensis) protein is Glutamyl-tRNA reductase.